The chain runs to 317 residues: Glutaminase (317 aa).

S67, N118, E162, N169, Y193, Y245, and V263 together coordinate substrate.

It belongs to the glutaminase family. As to quaternary structure, homotetramer.

It carries out the reaction L-glutamine + H2O = L-glutamate + NH4(+). In Brucella abortus (strain S19), this protein is Glutaminase.